Reading from the N-terminus, the 269-residue chain is Formamidopyrimidine-DNA glycosylase (269 aa).

P2 (schiff-base intermediate with DNA) is an active-site residue. E3 serves as the catalytic Proton donor. Catalysis depends on K57, which acts as the Proton donor; for beta-elimination activity. DNA contacts are provided by H90, R109, and K150. The segment at 235-269 (QVYGRHGEPCYTCGEFIQIAKYGQRSSFFCPSCQN) adopts an FPG-type zinc-finger fold. R259 acts as the Proton donor; for delta-elimination activity in catalysis.

Belongs to the FPG family. As to quaternary structure, monomer. Zn(2+) is required as a cofactor.

It carries out the reaction Hydrolysis of DNA containing ring-opened 7-methylguanine residues, releasing 2,6-diamino-4-hydroxy-5-(N-methyl)formamidopyrimidine.. The catalysed reaction is 2'-deoxyribonucleotide-(2'-deoxyribose 5'-phosphate)-2'-deoxyribonucleotide-DNA = a 3'-end 2'-deoxyribonucleotide-(2,3-dehydro-2,3-deoxyribose 5'-phosphate)-DNA + a 5'-end 5'-phospho-2'-deoxyribonucleoside-DNA + H(+). Functionally, involved in base excision repair of DNA damaged by oxidation or by mutagenic agents. Acts as a DNA glycosylase that recognizes and removes damaged bases. Has a preference for oxidized purines, such as 7,8-dihydro-8-oxoguanine (8-oxoG). Has AP (apurinic/apyrimidinic) lyase activity and introduces nicks in the DNA strand. Cleaves the DNA backbone by beta-delta elimination to generate a single-strand break at the site of the removed base with both 3'- and 5'-phosphates. This chain is Formamidopyrimidine-DNA glycosylase, found in Baumannia cicadellinicola subsp. Homalodisca coagulata.